The following is a 982-amino-acid chain: E3 ubiquitin-protein ligase CBL-B (982 aa).

The interval 35–167 is 4H; that stretch reads PPKQAAADRR…KAIFPNGQFQ (133 aa). The Cbl-PTB domain occupies 35–343; it reads PPKQAAADRR…GRSYNPDLTG (309 aa). The EF-hand-like stretch occupies residues 168 to 240; it reads GDNFRITKAD…FEFDIFTRLF (73 aa). Positions 221, 223, 225, 227, and 232 each coordinate Ca(2+). The interval 241 to 343 is SH2-like; that stretch reads QPWGSILRNW…GRSYNPDLTG (103 aa). Ser282 is modified (phosphoserine; by PKC/PRKCQ). Arg286 is a 4-O-phospho-L-tyrosine binding site. The segment at 344-372 is linker; that stretch reads LCEPTPHDHIKVTQEQYELYCEMGSTFQL. The residue at position 363 (Tyr363) is a Phosphotyrosine. The RING-type zinc-finger motif lies at 373 to 412; sequence CKICAENDKDVKIEPCGHLMCTSCLTAWQESDGQGCPFCR. The tract at residues 465–588 is disordered; that stretch reads ASVRKCTDRQ…SVPSRDQPMP (124 aa). Residues 473–486 are compositionally biased toward polar residues; sequence RQNSPVTSPGSSPL. A phosphoserine mark is found at Ser476, Ser480, Ser484, Ser521, Ser525, and Ser529. Residues 543–567 form an interaction with VAV1 region; sequence PLPAPPPPLRDPPPPPERPPPIPPD. Residues 544–566 are compositionally biased toward pro residues; sequence LPAPPPPLRDPPPPPERPPPIPP. Phosphoserine is present on Ser633. Tyr664 and Tyr708 each carry phosphotyrosine. Disordered stretches follow at residues 702-723 and 745-929; these read EDDD…SQPS and THGA…EAAL. Residues 714–723 show a composition bias toward polar residues; it reads HPVSLNSQPS. Over residues 819–828 the composition is skewed to pro residues; it reads PSLPPPPPPA. The span at 838-848 shows a compositional bias: low complexity; sequence PPGSSSRPSSG. Polar residues predominate over residues 884-899; that stretch reads RASQDYDQLPSSSDGS. The residue at position 889 (Tyr889) is a Phosphotyrosine. The tract at residues 891–927 is interaction with SH3KBP1; that stretch reads QLPSSSDGSQAPARPPKPRPRRTAPEIHHRKPHGPEA. The segment covering 906-922 has biased composition (basic residues); that stretch reads PKPRPRRTAPEIHHRKP. The UBA domain maps to 931 to 970; that stretch reads NVDAKIAKLMGEGYAFEEVKRALEIAQNNVEVARSILREF.

As to quaternary structure, interacts with SH3 domain-containing proteins LCK, CRK and SORBS1. Interacts with LCP2 and ZAP70. Interacts with CBL. Interacts with SH3 domain-containing proteins VAV1, FYN, FGR, PLCG1, GRB2, CRKL, PIK3R1 and SH3KBP1/CIN85. Identified in heterotrimeric complexes with SH3KBP1/CIN85, CD2AP and ARHGEF7, where one CBLB peptide binds two copies of the other protein. Interacts with poly-ubiquitinated proteins. Dimerization is required for the binding of poly-ubiquitin, but not for the binding of mono-ubiquitin. Interacts with EGFR (phosphorylated). Interacts with IFT20. Phosphorylated on tyrosine and serine residues upon TCR or BCR activation. Phosphorylated on Tyr-664 and Tyr-708 in adipocytes following insulin stimulation. In terms of processing, auto-ubiquitinated upon EGF-mediated cell activation or upon T-cell costimulation by CD28; which promotes proteasomal degradation.

It is found in the cytoplasm. The catalysed reaction is S-ubiquitinyl-[E2 ubiquitin-conjugating enzyme]-L-cysteine + [acceptor protein]-L-lysine = [E2 ubiquitin-conjugating enzyme]-L-cysteine + N(6)-ubiquitinyl-[acceptor protein]-L-lysine.. It functions in the pathway protein modification; protein ubiquitination. E3 ubiquitin-protein ligase which accepts ubiquitin from specific E2 ubiquitin-conjugating enzymes, and transfers it to substrates, generally promoting their degradation by the proteasome. Negatively regulates TCR (T-cell receptor), BCR (B-cell receptor) and FCER1 (high affinity immunoglobulin epsilon receptor) signal transduction pathways. In naive T-cells, inhibits VAV1 activation upon TCR engagement and imposes a requirement for CD28 costimulation for proliferation and IL-2 production. Also acts by promoting PIK3R1/p85 ubiquitination, which impairs its recruitment to the TCR and subsequent activation. In activated T-cells, inhibits PLCG1 activation and calcium mobilization upon restimulation and promotes anergy. In B-cells, acts by ubiquitinating SYK and promoting its proteasomal degradation. Slightly promotes SRC ubiquitination. May be involved in EGFR ubiquitination and internalization. May be functionally coupled with the E2 ubiquitin-protein ligase UB2D3. In association with CBL, required for proper feedback inhibition of ciliary platelet-derived growth factor receptor-alpha (PDGFRA) signaling pathway via ubiquitination and internalization of PDGFRA. The protein is E3 ubiquitin-protein ligase CBL-B (Cblb) of Mus musculus (Mouse).